Here is a 293-residue protein sequence, read N- to C-terminus: MVTVRAPATSANLGSGFDVFGAALTRPADVVTVEKAAETTIEVTGVGAQYIPEDPKKNTVGAVVEALDAPARIHIDKGVRPASGLGSSAASAAGAAVALNRLYDRGLSRSELVPIAAEGEAVVSGVAHSDNVAPSILGGFTVTTSEGTHAVDASIPLVVCLPDVAVSTRDARRVVPETASMDDLVETVGNAATLAIGMCRSDPDLVGAGMSDPVVTPERARLITGYDEVRAAAFDAGATGVTVSGAGPAILAVCRDGQRRGVAAAMLDAFSDAGIDSRAYQTRIGRGSTVLEE.

Position 80 to 90 (80 to 90 (RPASGLGSSAA)) interacts with ATP.

Belongs to the GHMP kinase family. Homoserine kinase subfamily.

It is found in the cytoplasm. It carries out the reaction L-homoserine + ATP = O-phospho-L-homoserine + ADP + H(+). It participates in amino-acid biosynthesis; L-threonine biosynthesis; L-threonine from L-aspartate: step 4/5. Catalyzes the ATP-dependent phosphorylation of L-homoserine to L-homoserine phosphate. The polypeptide is Homoserine kinase (Halorubrum lacusprofundi (strain ATCC 49239 / DSM 5036 / JCM 8891 / ACAM 34)).